The following is a 397-amino-acid chain: Putative serine/threonine-protein kinase R301 (397 aa).

Residues Q25–L397 enclose the Protein kinase domain. Residues V31–I39 and K53 contribute to the ATP site. The active-site Proton acceptor is D218.

The protein belongs to the protein kinase superfamily. Ser/Thr protein kinase family.

The protein resides in the virion. The catalysed reaction is L-seryl-[protein] + ATP = O-phospho-L-seryl-[protein] + ADP + H(+). It carries out the reaction L-threonyl-[protein] + ATP = O-phospho-L-threonyl-[protein] + ADP + H(+). The polypeptide is Putative serine/threonine-protein kinase R301 (Acanthamoeba polyphaga (Amoeba)).